Consider the following 353-residue polypeptide: (S)-8-amino-7-oxononanoate synthase BioU (353 aa).

An NAD(+)-binding site is contributed by 10 to 14 (GTGGI). Lysine 147 (nucleophile) is an active-site residue. Lysine 147 is subject to Allysine. 214–215 (GT) is an NAD(+) binding site. The Proton acceptor role is filled by glutamate 218. The active-site Proton donor and proton acceptor is the histidine 222.

This sequence belongs to the BioU family. In terms of assembly, monomer.

It catalyses the reaction (8S)-8-amino-7-oxononanoate + L-lysyl-[protein] + CO2 = (S)-2-amino-6-oxohexanoyl-[protein] + (7R,8S)-8-amino-7-(carboxyamino)nonanoate + 2 H(+). It carries out the reaction (8S)-8-amino-7-oxononanoate + L-lysyl-[protein] + NADPH + H(+) = N(6)-[(2S,3R)-2-amino-8-carboxyoctan-3-yl]-L-lysyl-[protein] + NADP(+) + H2O. The catalysed reaction is N(6)-[(2S,3R)-2-amino-8-carboxyoctan-3-yl]-L-lysyl-[protein] + CO2 + NADP(+) + H2O = (S)-2-amino-6-oxohexanoyl-[protein] + (7R,8S)-8-amino-7-(carboxyamino)nonanoate + NADPH + 3 H(+). The enzyme catalyses (8S)-8-amino-7-oxononanoate + L-lysyl-[protein] + NADH + H(+) = N(6)-[(2S,3R)-2-amino-8-carboxyoctan-3-yl]-L-lysyl-[protein] + NAD(+) + H2O. It catalyses the reaction N(6)-[(2S,3R)-2-amino-8-carboxyoctan-3-yl]-L-lysyl-[protein] + CO2 + NAD(+) + H2O = (S)-2-amino-6-oxohexanoyl-[protein] + (7R,8S)-8-amino-7-(carboxyamino)nonanoate + NADH + 3 H(+). It participates in cofactor biosynthesis; biotin biosynthesis. A 'suicide' enzyme that participates in biotin synthesis. Catalyzes the formation of (S)-8-amino-7-oxononanoate (DAN-carbamic acid) from (7R,8S)-8-amino-7-(carboxyamino)nonanoate (DAN), a function equivalent to the cannonical BioA reaction and the first half-reaction of BioD. The cellular requirement for biotin is thought be low enough that this single turnover enzyme supplies a sufficient amount of the cofactor. Overall it catalyzes three reactions: formation of a covalent linkage with 8-amino-7-oxononanoate to yield a BioU-DAN conjugate at the epsilon-amino group of Lys124 of BioU using NAD(P)H, carboxylation of the conjugate to form BioU-DAN-carbamic acid, and release of DAN-carbamic acid using NAD(P)+. Complements a bioA deletion in E.coli. In Haloferax mediterranei (strain ATCC 33500 / DSM 1411 / JCM 8866 / NBRC 14739 / NCIMB 2177 / R-4) (Halobacterium mediterranei), this protein is (S)-8-amino-7-oxononanoate synthase BioU.